The primary structure comprises 274 residues: Secreted RxLR effector protein 40 (274 aa).

Residues methionine 1–serine 21 form the signal peptide. A RxLR-dEER motif is present at residues arginine 35–arginine 53. Asparagine 41, asparagine 74, and asparagine 258 each carry an N-linked (GlcNAc...) asparagine glycan.

Belongs to the RxLR effector family.

It localises to the secreted. The protein localises to the host nucleus. The protein resides in the host cytoplasm. Secreted effector that completely suppresses the host cell death induced by cell death-inducing proteins. This chain is Secreted RxLR effector protein 40, found in Plasmopara viticola (Downy mildew of grapevine).